Here is a 261-residue protein sequence, read N- to C-terminus: Tryptophan synthase alpha chain (261 aa).

Residues E49 and D60 each act as proton acceptor in the active site.

Belongs to the TrpA family. As to quaternary structure, tetramer of two alpha and two beta chains.

It catalyses the reaction (1S,2R)-1-C-(indol-3-yl)glycerol 3-phosphate + L-serine = D-glyceraldehyde 3-phosphate + L-tryptophan + H2O. Its pathway is amino-acid biosynthesis; L-tryptophan biosynthesis; L-tryptophan from chorismate: step 5/5. In terms of biological role, the alpha subunit is responsible for the aldol cleavage of indoleglycerol phosphate to indole and glyceraldehyde 3-phosphate. This is Tryptophan synthase alpha chain from Leifsonia xyli subsp. xyli (strain CTCB07).